Reading from the N-terminus, the 274-residue chain is Eukaryotic translation initiation factor 3 subunit G (274 aa).

3 positions are modified to phosphoserine: Ser146, Ser164, and Ser171. The interval 149–170 is disordered; sequence ANTSAAATPEPDTDASGKYVPP. In terms of domain architecture, RRM spans 191-270; it reads TTLKISQLNT…LILHLEWPKK (80 aa).

This sequence belongs to the eIF-3 subunit G family. Component of the eukaryotic translation initiation factor 3 (eIF-3) complex.

It localises to the cytoplasm. RNA-binding component of the eukaryotic translation initiation factor 3 (eIF-3) complex, which is involved in protein synthesis of a specialized repertoire of mRNAs and, together with other initiation factors, stimulates binding of mRNA and methionyl-tRNAi to the 40S ribosome. The eIF-3 complex specifically targets and initiates translation of a subset of mRNAs involved in cell proliferation. This subunit can bind 18S rRNA. This chain is Eukaryotic translation initiation factor 3 subunit G, found in Meyerozyma guilliermondii (strain ATCC 6260 / CBS 566 / DSM 6381 / JCM 1539 / NBRC 10279 / NRRL Y-324) (Yeast).